Reading from the N-terminus, the 440-residue chain is UDP-N-acetylmuramoylalanine--D-glutamate ligase (440 aa).

115–121 (GSNGKST) contributes to the ATP binding site.

It belongs to the MurCDEF family.

It is found in the cytoplasm. The catalysed reaction is UDP-N-acetyl-alpha-D-muramoyl-L-alanine + D-glutamate + ATP = UDP-N-acetyl-alpha-D-muramoyl-L-alanyl-D-glutamate + ADP + phosphate + H(+). The protein operates within cell wall biogenesis; peptidoglycan biosynthesis. Its function is as follows. Cell wall formation. Catalyzes the addition of glutamate to the nucleotide precursor UDP-N-acetylmuramoyl-L-alanine (UMA). The sequence is that of UDP-N-acetylmuramoylalanine--D-glutamate ligase from Aliivibrio fischeri (strain MJ11) (Vibrio fischeri).